The sequence spans 265 residues: Glutamate racemase (265 aa).

Residues 7–8 (DS) and 39–40 (YG) contribute to the substrate site. The Proton donor/acceptor role is filled by C70. Residue 71–72 (NT) participates in substrate binding. Catalysis depends on C177, which acts as the Proton donor/acceptor.

This sequence belongs to the aspartate/glutamate racemases family.

The enzyme catalyses L-glutamate = D-glutamate. It functions in the pathway cell wall biogenesis; peptidoglycan biosynthesis. Provides the (R)-glutamate required for cell wall biosynthesis. The polypeptide is Glutamate racemase (Prochlorococcus marinus (strain NATL2A)).